The following is a 181-amino-acid chain: Inner membrane-spanning protein YciB (181 aa).

5 helical membrane passes run Phe3–Tyr23, Thr49–Gln69, Trp76–Phe96, Val119–Phe139, and Phe149–Leu169.

The protein belongs to the YciB family.

Its subcellular location is the cell inner membrane. Its function is as follows. Plays a role in cell envelope biogenesis, maintenance of cell envelope integrity and membrane homeostasis. The sequence is that of Inner membrane-spanning protein YciB from Nitrosospira multiformis (strain ATCC 25196 / NCIMB 11849 / C 71).